The following is a 334-amino-acid chain: Cytoskeleton protein RodZ (334 aa).

Over 1-111 (MNTEATHDQN…LGKRRKKRDG (111 aa)) the chain is Cytoplasmic. One can recognise an HTH cro/C1-type domain in the interval 19–71 (LRNAREQLGLSQQAVAERLCLKVSTVRDIEEDKAPSDLASTFLRGYIRSYARL). Residues 30–49 (QQAVAERLCLKVSTVRDIEE) constitute a DNA-binding region (H-T-H motif). Residues 112 to 132 (WLMSFTWLVLFVVVGLTGAWW) form a helical; Signal-anchor for type II membrane protein membrane-spanning segment. Topologically, residues 133-334 (WQNHKAQQEE…TLNAEPTPAQ (202 aa)) are periplasmic. Residues 155-241 (NADKDSGQSV…PSALPTSQAG (87 aa)) are disordered. The segment covering 161–175 (GQSVPLDTGAVTSQD) has biased composition (polar residues). 2 stretches are compositionally biased toward low complexity: residues 176–211 (TTPA…TVVA) and 219–241 (TAAT…SQAG).

Belongs to the RodZ family.

Its subcellular location is the cell inner membrane. Functionally, cytoskeletal protein that is involved in cell-shape control through regulation of the length of the long axis. The sequence is that of Cytoskeleton protein RodZ from Salmonella dublin (strain CT_02021853).